The sequence spans 456 residues: tRNA(Ile)-lysidine synthase (456 aa).

Residue 27 to 32 (SGGVDS) coordinates ATP.

This sequence belongs to the tRNA(Ile)-lysidine synthase family.

The protein resides in the cytoplasm. The catalysed reaction is cytidine(34) in tRNA(Ile2) + L-lysine + ATP = lysidine(34) in tRNA(Ile2) + AMP + diphosphate + H(+). In terms of biological role, ligates lysine onto the cytidine present at position 34 of the AUA codon-specific tRNA(Ile) that contains the anticodon CAU, in an ATP-dependent manner. Cytidine is converted to lysidine, thus changing the amino acid specificity of the tRNA from methionine to isoleucine. The chain is tRNA(Ile)-lysidine synthase from Vibrio atlanticus (strain LGP32) (Vibrio splendidus (strain Mel32)).